The chain runs to 492 residues: Catalase isozyme 2 (492 aa).

Residues H65 and N138 contribute to the active site. Y348 is a binding site for heme.

Belongs to the catalase family. Homotetramer. Heme is required as a cofactor.

The protein resides in the peroxisome. The catalysed reaction is 2 H2O2 = O2 + 2 H2O. Its function is as follows. Occurs in almost all aerobically respiring organisms and serves to protect cells from the toxic effects of hydrogen peroxide. This Gossypium hirsutum (Upland cotton) protein is Catalase isozyme 2 (CAT2).